Here is a 504-residue protein sequence, read N- to C-terminus: Cystathionine beta-synthase (504 aa).

The heme site is built by Cys-12 and His-23. N6-(pyridoxal phosphate)lysine is present on Lys-78. Residues Asn-108, 215-219 (GTGGT), and Ser-307 contribute to the pyridoxal 5'-phosphate site. 2 consecutive CBS domains span residues 375–434 (LSFD…IVKC) and 442–498 (MVKQ…NGTS).

It belongs to the cysteine synthase/cystathionine beta-synthase family. As to quaternary structure, homodimer. It depends on pyridoxal 5'-phosphate as a cofactor.

It carries out the reaction L-homocysteine + L-serine = L,L-cystathionine + H2O. It functions in the pathway amino-acid biosynthesis; L-cysteine biosynthesis; L-cysteine from L-homocysteine and L-serine: step 1/2. Has no response to S-adenosyl-methionine/AdoMet, unlike mammalian orthologs. Binds non-covalently to a heme group that may control the redox sensitivity of the enzyme. In terms of biological role, hydro-lyase catalyzing the first step of the transsulfuration pathway, where the hydroxyl group of L-serine is displaced by L-homocysteine in a beta-replacement reaction to form L-cystathionine, the precursor of L-cysteine. This chain is Cystathionine beta-synthase, found in Apis mellifera (Honeybee).